The following is a 504-amino-acid chain: L-carnitine/gamma-butyrobetaine antiporter (504 aa).

The next 12 membrane-spanning stretches (helical) occupy residues 10–30 (IEPK…WLTV), 51–71 (WGWA…WLVF), 92–112 (IFMM…SIEI), 143–163 (GPLP…FFFV), 195–215 (FYLV…TPLV), 231–251 (LDAI…ACGL), 263–283 (SYLS…SFIM), 316–336 (WTVF…IFLA), 347–367 (LCFG…TVLG), 398–418 (WAAL…CFIA), 446–466 (LLVR…LLAL), and 475–495 (AIIA…LSFI).

Belongs to the BCCT transporter (TC 2.A.15) family. CaiT subfamily. In terms of assembly, homotrimer.

It is found in the cell inner membrane. It carries out the reaction 4-(trimethylamino)butanoate(in) + (R)-carnitine(out) = 4-(trimethylamino)butanoate(out) + (R)-carnitine(in). Its pathway is amine and polyamine metabolism; carnitine metabolism. In terms of biological role, catalyzes the exchange of L-carnitine for gamma-butyrobetaine. The chain is L-carnitine/gamma-butyrobetaine antiporter from Shigella flexneri serotype 5b (strain 8401).